Consider the following 35-residue polypeptide: Photosystem II reaction center protein T (35 aa).

The helical transmembrane segment at 3–23 (ALVYTFLLVSTLGIIFFAIFF) threads the bilayer.

It belongs to the PsbT family. PSII is composed of 1 copy each of membrane proteins PsbA, PsbB, PsbC, PsbD, PsbE, PsbF, PsbH, PsbI, PsbJ, PsbK, PsbL, PsbM, PsbT, PsbY, PsbZ, Psb30/Ycf12, at least 3 peripheral proteins of the oxygen-evolving complex and a large number of cofactors. It forms dimeric complexes.

The protein localises to the plastid. It localises to the chloroplast thylakoid membrane. Found at the monomer-monomer interface of the photosystem II (PS II) dimer, plays a role in assembly and dimerization of PSII. PSII is a light-driven water plastoquinone oxidoreductase, using light energy to abstract electrons from H(2)O, generating a proton gradient subsequently used for ATP formation. The sequence is that of Photosystem II reaction center protein T from Metasequoia glyptostroboides (Dawn redwood).